A 160-amino-acid chain; its full sequence is Eukaryotic translation initiation factor 5A (160 aa).

The segment covering 1–13 has biased composition (basic and acidic residues); the sequence is MSDSEEHHFESKA. The interval 1 to 22 is disordered; sequence MSDSEEHHFESKADAGASKTYP. The residue at position 53 (lysine 53) is a Hypusine.

Belongs to the eIF-5A family. Lys-53 undergoes hypusination, a unique post-translational modification that consists in the addition of a butylamino group from spermidine to lysine side chain, leading to the formation of the unusual amino acid hypusine. eIF-5As are the only known proteins to undergo this modification, which is essential for their function.

Its function is as follows. Translation factor that promotes translation elongation and termination, particularly upon ribosome stalling at specific amino acid sequence contexts. Binds between the exit (E) and peptidyl (P) site of the ribosome and promotes rescue of stalled ribosome: specifically required for efficient translation of polyproline-containing peptides as well as other motifs that stall the ribosome. Acts as a ribosome quality control (RQC) cofactor by joining the RQC complex to facilitate peptidyl transfer during CAT tailing step. The polypeptide is Eukaryotic translation initiation factor 5A (TIF5A) (Zea mays (Maize)).